The chain runs to 170 residues: Peptide deformylase (170 aa).

The Fe cation site is built by Cys-92 and His-134. Residue Glu-135 is part of the active site. Residue His-138 participates in Fe cation binding.

It belongs to the polypeptide deformylase family. Fe(2+) is required as a cofactor.

The catalysed reaction is N-terminal N-formyl-L-methionyl-[peptide] + H2O = N-terminal L-methionyl-[peptide] + formate. Its function is as follows. Removes the formyl group from the N-terminal Met of newly synthesized proteins. Requires at least a dipeptide for an efficient rate of reaction. N-terminal L-methionine is a prerequisite for activity but the enzyme has broad specificity at other positions. This is Peptide deformylase from Chromohalobacter salexigens (strain ATCC BAA-138 / DSM 3043 / CIP 106854 / NCIMB 13768 / 1H11).